Consider the following 509-residue polypeptide: Sperm-associated antigen 6 (509 aa).

ARM repeat units follow at residues 31–70 (PQNI…RLAN), 73–112 (DDLA…AVGK), 115–154 (PQLA…YIAR), 157–196 (AELS…DIAK), 199–238 (PELA…QVSK), 241–280 (VDLA…EIAK), 325–365 (ENLA…QIGR), and 368–409 (PEHA…NILQ).

Interacts with SPAG16 and SPAG17. As to expression, highly expressed in testis.

It is found in the cytoplasm. It localises to the cytoskeleton. The protein localises to the cell projection. Its subcellular location is the cilium. The protein resides in the flagellum. It is found in the cilium axoneme. Important for structural integrity of the central apparatus in the sperm tail and for flagellar motility. The protein is Sperm-associated antigen 6 (SPAG6) of Homo sapiens (Human).